The following is an 860-amino-acid chain: Protein translocase subunit SecA (860 aa).

ATP is bound by residues glutamine 87, 105–109 (GEGKT), and aspartate 514. Zn(2+) is bound by residues cysteine 846, cysteine 848, cysteine 857, and cysteine 858.

Belongs to the SecA family. Monomer and homodimer. Part of the essential Sec protein translocation apparatus which comprises SecA, SecYEG and auxiliary proteins SecDF. Other proteins may also be involved. It depends on Zn(2+) as a cofactor.

Its subcellular location is the cell membrane. It localises to the cytoplasm. It carries out the reaction ATP + H2O + cellular proteinSide 1 = ADP + phosphate + cellular proteinSide 2.. Functionally, part of the Sec protein translocase complex. Interacts with the SecYEG preprotein conducting channel. Has a central role in coupling the hydrolysis of ATP to the transfer of proteins into and across the cell membrane, serving as an ATP-driven molecular motor driving the stepwise translocation of polypeptide chains across the membrane. This is Protein translocase subunit SecA from Endomicrobium trichonymphae.